The primary structure comprises 166 residues: Interferon gamma (166 aa).

The signal sequence occupies residues 1–23 (MKYTSYFLALLLCVLLGFSGSYG). Residue glutamine 24 is modified to Pyrrolidone carboxylic acid. Asparagine 39 and asparagine 106 each carry an N-linked (GlcNAc...) asparagine glycan.

This sequence belongs to the type II (or gamma) interferon family. As to quaternary structure, homodimer. Interacts with IFNGR1 (via extracellular domain); this interaction promotes IFNGR1 dimerization. As to expression, released primarily from activated T lymphocytes.

The protein resides in the secreted. Functionally, type II interferon produced by immune cells such as T-cells and NK cells that plays crucial roles in antimicrobial, antiviral, and antitumor responses by activating effector immune cells and enhancing antigen presentation. Primarily signals through the JAK-STAT pathway after interaction with its receptor IFNGR1 to affect gene regulation. Upon IFNG binding, IFNGR1 intracellular domain opens out to allow association of downstream signaling components JAK2, JAK1 and STAT1, leading to STAT1 activation, nuclear translocation and transcription of IFNG-regulated genes. Many of the induced genes are transcription factors such as IRF1 that are able to further drive regulation of a next wave of transcription. Plays a role in class I antigen presentation pathway by inducing a replacement of catalytic proteasome subunits with immunoproteasome subunits. In turn, increases the quantity, quality, and repertoire of peptides for class I MHC loading. Increases the efficiency of peptide generation also by inducing the expression of activator PA28 that associates with the proteasome and alters its proteolytic cleavage preference. Up-regulates as well MHC II complexes on the cell surface by promoting expression of several key molecules such as cathepsins B/CTSB, H/CTSH, and L/CTSL. Participates in the regulation of hematopoietic stem cells during development and under homeostatic conditions by affecting their development, quiescence, and differentiation. This is Interferon gamma (IFNG) from Bubalus carabanensis (Swamp type water buffalo).